Reading from the N-terminus, the 176-residue chain is Small ribosomal subunit protein uS8c (176 aa).

The protein belongs to the universal ribosomal protein uS8 family. As to quaternary structure, part of the 30S ribosomal subunit.

The protein resides in the plastid. The protein localises to the chloroplast. One of the primary rRNA binding proteins, it binds directly to 16S rRNA central domain where it helps coordinate assembly of the platform of the 30S subunit. The protein is Small ribosomal subunit protein uS8c (rps8) of Stigeoclonium helveticum (Green alga).